The chain runs to 512 residues: Ribose import ATP-binding protein RbsA 1 (512 aa).

ABC transporter domains are found at residues 8-244 (FRME…IGRE) and 254-502 (AHRG…LNIA). 40–47 (GENGAGKS) is a binding site for ATP.

Belongs to the ABC transporter superfamily. Ribose importer (TC 3.A.1.2.1) family. In terms of assembly, the complex is composed of an ATP-binding protein (RbsA), two transmembrane proteins (RbsC) and a solute-binding protein (RbsB).

The protein resides in the cell inner membrane. The catalysed reaction is D-ribose(out) + ATP + H2O = D-ribose(in) + ADP + phosphate + H(+). In terms of biological role, part of the ABC transporter complex RbsABC involved in ribose import. Responsible for energy coupling to the transport system. The sequence is that of Ribose import ATP-binding protein RbsA 1 from Rhizobium johnstonii (strain DSM 114642 / LMG 32736 / 3841) (Rhizobium leguminosarum bv. viciae).